Reading from the N-terminus, the 213-residue chain is Large ribosomal subunit protein uL3 (213 aa).

Residues 130-161 (KRGNMTHGSKNHRLPGSTGAGTTPGRVYPGKR) form a disordered region.

It belongs to the universal ribosomal protein uL3 family. Part of the 50S ribosomal subunit. Forms a cluster with proteins L14 and L19.

One of the primary rRNA binding proteins, it binds directly near the 3'-end of the 23S rRNA, where it nucleates assembly of the 50S subunit. This is Large ribosomal subunit protein uL3 from Picosynechococcus sp. (strain ATCC 27264 / PCC 7002 / PR-6) (Agmenellum quadruplicatum).